The following is a 1034-amino-acid chain: FERM domain-containing protein 4B (1034 aa).

In terms of domain architecture, FERM spans 59–361 (RHCQVHLLDD…SQHQFYLDRK (303 aa)). A Phosphoserine modification is found at S372. 2 coiled-coil regions span residues 417–450 (EVSEEQKREKILELKKKEKLLQEKLLKKVEELKK) and 531–561 (KKKRKQDYTDAMKKLQEIENAINEYRIRCGK). Positions 542–971 (MKKLQEIENA…TQLTIGLSDY (430 aa)) are necessary for adherens junction and tight junction localization. The segment covering 576-589 (PSESSSLSDTTTYD) has biased composition (low complexity). Disordered regions lie at residues 576–614 (PSESSSLSDTTTYDDPSDAFTFPGQRSSSVPHSPRILPP), 635–698 (DTRQ…LESQ), 712–735 (FSLSKSQRSSSTEILDDGSSYTSQ), and 752–786 (TTQTLDTRTRGRRRSKKQNVSTSNSGSMPNLAQKD). Residue S608 is modified to Phosphoserine. 2 stretches are compositionally biased toward polar residues: residues 635 to 650 (DTRQSREMLSTHSSPY) and 663 to 674 (MPTTPVLTRNAY). Residues 675 to 685 (SSSHLEPESSS) are compositionally biased toward low complexity. S697 is modified (phosphoserine). Residues 713–722 (SLSKSQRSSS) show a composition bias toward low complexity. Residues 769–781 (QNVSTSNSGSMPN) are compositionally biased toward polar residues. A Glycyl lysine isopeptide (Lys-Gly) (interchain with G-Cter in SUMO2) cross-link involves residue K882. Disordered stretches follow at residues 905–925 (RASGQKDQGHSPQTSFDSDRG) and 1004–1034 (DGTDGNQLEDNLESSEQRLFWHEDSKPGTLV). The segment covering 906-920 (ASGQKDQGHSPQTSF) has biased composition (polar residues). At S915 the chain carries Phosphoserine. Positions 1018–1034 (SEQRLFWHEDSKPGTLV) are enriched in basic and acidic residues. Residue K1029 forms a Glycyl lysine isopeptide (Lys-Gly) (interchain with G-Cter in SUMO2) linkage.

As to quaternary structure, interacts with CYTH3. Interacts with PARD3. Interacts with CYTH1.

The protein resides in the cytoplasm. The protein localises to the cytoskeleton. It is found in the cell junction. Its subcellular location is the tight junction. It localises to the adherens junction. Functionally, member of GRP1 signaling complexes that are acutely recruited to plasma membrane ruffles in response to insulin receptor signaling. May function as a scaffolding protein that regulates epithelial cell polarity by connecting ARF6 activation with the PAR3 complex. Plays a redundant role with FRMD4A in epithelial polarization. This chain is FERM domain-containing protein 4B, found in Homo sapiens (Human).